A 474-amino-acid polypeptide reads, in one-letter code: Peroxisome proliferator-activated receptor alpha (474 aa).

The segment at residues Asn106–Phe180 is a DNA-binding region (nuclear receptor). 2 NR C4-type zinc fingers span residues Cys109–Cys129 and Cys146–Cys168. Residues Phe245–Asp472 form the NR LBD domain.

It belongs to the nuclear hormone receptor family. NR1 subfamily. In terms of assembly, heterodimer with the retinoid X receptor. As to expression, ubiquitous.

The protein resides in the nucleus. In terms of biological role, ligand-activated transcription factor. Key regulator of lipid metabolism. Activated by lipids. Receptor for peroxisome proliferators such as hypolipidemic drugs and fatty acids. Once activated by a ligand, the receptor binds to promoter elements of target genes. Regulates the peroxisomal beta-oxidation pathway of fatty acids. The chain is Peroxisome proliferator-activated receptor alpha (ppara) from Xenopus laevis (African clawed frog).